The primary structure comprises 185 residues: Elongation factor P (185 aa).

Belongs to the elongation factor P family.

It localises to the cytoplasm. Its pathway is protein biosynthesis; polypeptide chain elongation. Involved in peptide bond synthesis. Stimulates efficient translation and peptide-bond synthesis on native or reconstituted 70S ribosomes in vitro. Probably functions indirectly by altering the affinity of the ribosome for aminoacyl-tRNA, thus increasing their reactivity as acceptors for peptidyl transferase. The chain is Elongation factor P from Bacillus pumilus (strain SAFR-032).